Here is a 487-residue protein sequence, read N- to C-terminus: MSALIEKSLTEIHAMLMTKEVTATEAVKACLEQIAKSEPETKALLHICNDEALKQAEEMDAAGPDASKPLWGVPVVIKDALATNGIPTTAGSKILEGFTPFYDSTAVAKLKEAGAIIVGKANMDEFAMGSTTENSAYQTTTNPWDASRVPGGSSGGSGATVAAGQCYAALGTDTGGSIRLPASFCGCVGVKPTYGRVSRYGMIAYGSSLDQIGPMTRTVEDAARVLNVIGGHDQRDSTSAEQPMEDFVAALEERKDLSGLTIGLPEEYWGEGLSKEVSEACRAAIAKAEELGAKTVPVKLSMTEYAIATYYIIAMAEASSNLSRFDGVRYGHRTEDPKELAELYTKSRTEAFGDEVQRRIIIGTYVLSAGYYDAYYRKAAQIRRLLREDFNKAFESCDIIASPACPTTAFPVGELTSDPLQMYLQDIFTISLNLVGMPGMSLPVAFGKETNMPVGLQFMAPAFDEKTMLQAAHVLEKNLPELPKVKL.

Lys78 acts as the Charge relay system in catalysis. Residues 135-144 show a composition bias toward polar residues; that stretch reads SAYQTTTNPW. Residues 135–155 form a disordered region; that stretch reads SAYQTTTNPWDASRVPGGSSG. Ser153 serves as the catalytic Charge relay system. Ser177 functions as the Acyl-ester intermediate in the catalytic mechanism.

The protein belongs to the amidase family. GatA subfamily. Heterotrimer of A, B and C subunits.

It catalyses the reaction L-glutamyl-tRNA(Gln) + L-glutamine + ATP + H2O = L-glutaminyl-tRNA(Gln) + L-glutamate + ADP + phosphate + H(+). In terms of biological role, allows the formation of correctly charged Gln-tRNA(Gln) through the transamidation of misacylated Glu-tRNA(Gln) in organisms which lack glutaminyl-tRNA synthetase. The reaction takes place in the presence of glutamine and ATP through an activated gamma-phospho-Glu-tRNA(Gln). The chain is Glutamyl-tRNA(Gln) amidotransferase subunit A from Maridesulfovibrio salexigens (strain ATCC 14822 / DSM 2638 / NCIMB 8403 / VKM B-1763) (Desulfovibrio salexigens).